The primary structure comprises 1467 residues: MSDESASGSDPDLDPDVELEDAEEEEEEEEVAVEECDRDDEEDLLDDPSLEGMCGTEHAQLGEDGQQPPRCTSTTSSQSEPSEQLRRHQGKNLASEDPKKKRAQKPSHMRRNIRKLLREDQLEPVTKAAQQEELERRKRLEQQRKDYAAPIPTVPLEFLPEEIALRASDGPQLPPRVLAQEVICLDSSSGSEDEKSSRDEVIELSSGEEDTLHIVDSSESVSEDDEEEEKGGTHVNDVLNQRDALGRVLVNLNHPPEEENVFLAPQLARAVKPHQIGGIRFLYDNLVESLERFKTSSGFGCILAHSMGLGKTLQVISFIDVLFRHTPAKTVLAIVPVNTLQNWLAEFNMWLPPPEALPADNKPEEVQPRFFKVHILNDEHKTMASRAKVMADWVSEGGVLLMGYEMYRLLTLKKSFATGRPKKTKKRSHPVIIDLDEEDRQQEFRREFEKALCRPGPDVVICDEGHRIKNCQASTSQALKNIRSRRRVVLTGYPLQNNLIEYWCMVDFVRPDFLGTRQEFSNMFERPILNGQCIDSTPQDVRLMRYRSHVLHSLLEGFVQRRGHTVLKIHLPAKEENVILVRLSKIQRDLYTQFMDRFRDCGSSGWLGLNPLKAFCVCCKIWNHPDVLYEALQKESLANEQDLDVEELGSAGTSARCPPQGTKGKGEDSTLASSMGEATNSKFLQGVGFNPFQERGNNIVTYEWAKDLLTNYQTGVLENSPKMVLLFHLIEESVKLGDKILVFSQSLSTLALIEEFLGKREVPCPPGTEGQGAQKWVRNISYFRLDGSTPAFERERLINQFNDPSNLTTWLFLLSTRAGCLGVNLIGANRVVVFDASWNPCHDAQAVCRVYRYGQKKPCYIYRLVADYTLEKKIYDRQISKQGMSDRVVDDLNPMLNFTRKEVENLLHFVEKEPAPQVSLNVKGIKESVLQLACLKYPHLITKEPFEHESLLLNRKDHKLTKAEKKAAKKSYEEDKRTSVPYTRPSYAQYYPASDQSLTSIPAFSQRNWQPTLKGDEKPVASVRPVQSTPIPMMPRHVPLGGSVSSASSTNPSMNFPINYLQRAGVLVQKVVTTTDIVIPGLNSSTDVQARINAGESIHIIRGTKGTYIRTSDGRIFAVRATGKPKVPEDGRMAASGSQGPSCESTSNGRHSASSPKAPDPEGLARPVSPDSPEIISELQQYADVAAARESRQSSPSTNAALPGPPAQLMDSSAVPGTALGTEPRLGGHCLNSSLLVTGQPCGDRHPVLDLRGHKRKLATPPAAQESSRRRSRKGHLPAPVQPYEHGYPVSGGFAMPPVSLNHNLTTPFTSQAGENSLFMGSTPSYYQLSNLLADARLVFPVTTDPLVPAGPVSSSSTATSVTASNPSFMLNPSVPGILPSYSLPFSQPLLSEPRMFAPFPSPVLPSNLSRGMSIYPGYMSPHAGYPAGGLLRSQVPPFDSHEVAEVGFSSNDDEDKDDDVIEVTGK.

Disordered regions lie at residues 1–150 (MSDE…YAAP) and 186–234 (DSSS…GGTH). Over residues 11-49 (PDLDPDVELEDAEEEEEEEEVAVEECDRDDEEDLLDDPS) the composition is skewed to acidic residues. Residues 72-82 (TSTTSSQSEPS) show a composition bias toward low complexity. Basic residues predominate over residues 100–115 (KKRAQKPSHMRRNIRK). Residues lysine 115 and lysine 127 each participate in a glycyl lysine isopeptide (Lys-Gly) (interchain with G-Cter in SUMO2) cross-link. Composition is skewed to basic and acidic residues over residues 133-147 (ELERRKRLEQQRKDY) and 192-201 (EDEKSSRDEV). Lysine 272 is covalently cross-linked (Glycyl lysine isopeptide (Lys-Gly) (interchain with G-Cter in SUMO2)). A Helicase ATP-binding domain is found at 292–512 (RFKTSSGFGC…WCMVDFVRPD (221 aa)). 305-312 (HSMGLGKT) contacts ATP. Positions 463-466 (DEGH) match the DEAH box motif. The short motif at 551–555 (LHSLL) is the LXXLL motif 1 element. Residues 649-673 (GSAGTSARCPPQGTKGKGEDSTLAS) are disordered. Residues lysine 665, lysine 682, lysine 759, lysine 901, lysine 1014, and lysine 1018 each participate in a glycyl lysine isopeptide (Lys-Gly) (interchain with G-Cter in SUMO2) cross-link. The Helicase C-terminal domain maps to 728–896 (HLIEESVKLG…RVVDDLNPML (169 aa)). The interval 1120–1171 (RATGKPKVPEDGRMAASGSQGPSCESTSNGRHSASSPKAPDPEGLARPVSPD) is disordered. Positions 1136-1155 (SGSQGPSCESTSNGRHSASS) are enriched in polar residues. 2 positions are modified to phosphoserine: serine 1169 and serine 1172. Disordered regions lie at residues 1184 to 1221 (DVAAARESRQSSPSTNAALPGPPAQLMDSSAVPGTALG) and 1247 to 1284 (PVLDLRGHKRKLATPPAAQESSRRRSRKGHLPAPVQPY). Threonine 1260 bears the Phosphothreonine mark. Positions 1329-1333 (LSNLL) match the LXXLL motif 2 motif. Residues 1445-1467 (AEVGFSSNDDEDKDDDVIEVTGK) form a disordered region. Residues 1452–1467 (NDDEDKDDDVIEVTGK) are compositionally biased toward acidic residues.

It belongs to the SNF2/RAD54 helicase family. Interacts with AR via its N-terminus. Interacts with DYRK1A. Binds DNA and mononucleosomes, but does not seem to form large multiprotein complexes. Post-translationally, sumoylated.

The protein localises to the nucleus. The catalysed reaction is ATP + H2O = ADP + phosphate + H(+). Enzyme activity is enhanced by dsDNA (double-stranded DNA) and ssDNA (single-stranded DNA). DNA helicase that modulates androgen receptor (AR)-dependent transactivation in a promoter-dependent manner. Not able to remodel mononucleosomes in vitro. In Homo sapiens (Human), this protein is Helicase ARIP4 (RAD54L2).